Here is a 332-residue protein sequence, read N- to C-terminus: CRISPR-associated endonuclease Cas1 3 (332 aa).

Mn(2+) is bound by residues Glu159, His224, and Glu239.

It belongs to the CRISPR-associated endonuclease Cas1 family. Homodimer, forms a heterotetramer with a Cas2 homodimer. Mg(2+) is required as a cofactor. It depends on Mn(2+) as a cofactor.

Functionally, CRISPR (clustered regularly interspaced short palindromic repeat), is an adaptive immune system that provides protection against mobile genetic elements (viruses, transposable elements and conjugative plasmids). CRISPR clusters contain spacers, sequences complementary to antecedent mobile elements, and target invading nucleic acids. CRISPR clusters are transcribed and processed into CRISPR RNA (crRNA). Acts as a dsDNA endonuclease. Involved in the integration of spacer DNA into the CRISPR cassette. The sequence is that of CRISPR-associated endonuclease Cas1 3 from Thermus thermophilus (strain ATCC 27634 / DSM 579 / HB8).